A 75-amino-acid polypeptide reads, in one-letter code: Sec-independent protein translocase protein TatA (75 aa).

Residues methionine 1–glycine 21 form a helical membrane-spanning segment. The segment at aspartate 50–alanine 75 is disordered.

This sequence belongs to the TatA/E family. In terms of assembly, the Tat system comprises two distinct complexes: a TatABC complex, containing multiple copies of TatA, TatB and TatC subunits, and a separate TatA complex, containing only TatA subunits. Substrates initially bind to the TatABC complex, which probably triggers association of the separate TatA complex to form the active translocon.

The protein resides in the cell inner membrane. In terms of biological role, part of the twin-arginine translocation (Tat) system that transports large folded proteins containing a characteristic twin-arginine motif in their signal peptide across membranes. TatA could form the protein-conducting channel of the Tat system. This chain is Sec-independent protein translocase protein TatA, found in Mannheimia succiniciproducens (strain KCTC 0769BP / MBEL55E).